The following is a 427-amino-acid chain: Gamma-glutamyl phosphate reductase (427 aa).

It belongs to the gamma-glutamyl phosphate reductase family.

It is found in the cytoplasm. It carries out the reaction L-glutamate 5-semialdehyde + phosphate + NADP(+) = L-glutamyl 5-phosphate + NADPH + H(+). It participates in amino-acid biosynthesis; L-proline biosynthesis; L-glutamate 5-semialdehyde from L-glutamate: step 2/2. In terms of biological role, catalyzes the NADPH-dependent reduction of L-glutamate 5-phosphate into L-glutamate 5-semialdehyde and phosphate. The product spontaneously undergoes cyclization to form 1-pyrroline-5-carboxylate. The polypeptide is Gamma-glutamyl phosphate reductase (Brucella ovis (strain ATCC 25840 / 63/290 / NCTC 10512)).